The primary structure comprises 255 residues: Undecaprenyl-diphosphatase (255 aa).

The next 6 membrane-spanning stretches (helical) occupy residues 1–21 (MDII…FLPI), 75–95 (IIIS…IVYQ), 96–116 (LFTV…FLIV), 174–194 (TEFS…FDIV), 203–223 (GDIS…LITI), and 234–254 (NFVP…MFFV).

This sequence belongs to the UppP family.

The protein resides in the cell membrane. It carries out the reaction di-trans,octa-cis-undecaprenyl diphosphate + H2O = di-trans,octa-cis-undecaprenyl phosphate + phosphate + H(+). Its function is as follows. Catalyzes the dephosphorylation of undecaprenyl diphosphate (UPP). The sequence is that of Undecaprenyl-diphosphatase from Methanococcus aeolicus (strain ATCC BAA-1280 / DSM 17508 / OCM 812 / Nankai-3).